A 372-amino-acid chain; its full sequence is 4-hydroxy-3-methylbut-2-en-1-yl diphosphate synthase (flavodoxin) (372 aa).

[4Fe-4S] cluster contacts are provided by C270, C273, C305, and E312.

This sequence belongs to the IspG family. [4Fe-4S] cluster is required as a cofactor.

It catalyses the reaction (2E)-4-hydroxy-3-methylbut-2-enyl diphosphate + oxidized [flavodoxin] + H2O + 2 H(+) = 2-C-methyl-D-erythritol 2,4-cyclic diphosphate + reduced [flavodoxin]. It participates in isoprenoid biosynthesis; isopentenyl diphosphate biosynthesis via DXP pathway; isopentenyl diphosphate from 1-deoxy-D-xylulose 5-phosphate: step 5/6. Its function is as follows. Converts 2C-methyl-D-erythritol 2,4-cyclodiphosphate (ME-2,4cPP) into 1-hydroxy-2-methyl-2-(E)-butenyl 4-diphosphate. The protein is 4-hydroxy-3-methylbut-2-en-1-yl diphosphate synthase (flavodoxin) of Salmonella schwarzengrund (strain CVM19633).